The sequence spans 612 residues: Dihydroxy-acid dehydratase (612 aa).

Asp-81 serves as a coordination point for Mg(2+). Cys-122 provides a ligand contact to [2Fe-2S] cluster. 2 residues coordinate Mg(2+): Asp-123 and Lys-124. Lys-124 is modified (N6-carboxylysine). Residue Cys-195 coordinates [2Fe-2S] cluster. Glu-491 is a Mg(2+) binding site. The active-site Proton acceptor is Ser-517.

It belongs to the IlvD/Edd family. Homodimer. [2Fe-2S] cluster serves as cofactor. Requires Mg(2+) as cofactor.

The enzyme catalyses (2R)-2,3-dihydroxy-3-methylbutanoate = 3-methyl-2-oxobutanoate + H2O. It carries out the reaction (2R,3R)-2,3-dihydroxy-3-methylpentanoate = (S)-3-methyl-2-oxopentanoate + H2O. The protein operates within amino-acid biosynthesis; L-isoleucine biosynthesis; L-isoleucine from 2-oxobutanoate: step 3/4. It participates in amino-acid biosynthesis; L-valine biosynthesis; L-valine from pyruvate: step 3/4. Its function is as follows. Functions in the biosynthesis of branched-chain amino acids. Catalyzes the dehydration of (2R,3R)-2,3-dihydroxy-3-methylpentanoate (2,3-dihydroxy-3-methylvalerate) into 2-oxo-3-methylpentanoate (2-oxo-3-methylvalerate) and of (2R)-2,3-dihydroxy-3-methylbutanoate (2,3-dihydroxyisovalerate) into 2-oxo-3-methylbutanoate (2-oxoisovalerate), the penultimate precursor to L-isoleucine and L-valine, respectively. The sequence is that of Dihydroxy-acid dehydratase from Haemophilus influenzae (strain PittEE).